The sequence spans 193 residues: 7-methyl-GTP pyrophosphatase (193 aa).

D69 serves as the catalytic Proton acceptor.

This sequence belongs to the Maf family. YceF subfamily. It depends on a divalent metal cation as a cofactor.

The protein localises to the cytoplasm. It catalyses the reaction N(7)-methyl-GTP + H2O = N(7)-methyl-GMP + diphosphate + H(+). In terms of biological role, nucleoside triphosphate pyrophosphatase that hydrolyzes 7-methyl-GTP (m(7)GTP). May have a dual role in cell division arrest and in preventing the incorporation of modified nucleotides into cellular nucleic acids. In Chromohalobacter salexigens (strain ATCC BAA-138 / DSM 3043 / CIP 106854 / NCIMB 13768 / 1H11), this protein is 7-methyl-GTP pyrophosphatase.